The sequence spans 2059 residues: DNA polymerase theta (2059 aa).

The interval 25 to 45 (DKENAQPGNGNIQVQSAGNEV) is disordered. A compositionally biased stretch (polar residues) spans 30 to 45 (QPGNGNIQVQSAGNEV). Positions 243-416 (PRLLFEHCNL…WLDAELYITN (174 aa)) constitute a Helicase ATP-binding domain. Position 256-263 (256-263 (APTSAGKT)) interacts with ATP. Residues 357–360 (DEVH) carry the DEAH box motif. The region spanning 464-666 (CIETLLEGCS…HLKRALLEVI (203 aa)) is the Helicase C-terminal domain. Disordered stretches follow at residues 1052 to 1073 (PPVK…KNPR), 1168 to 1190 (PQLA…VNEG), 1204 to 1274 (QRTQ…SRKV), and 1330 to 1372 (PHAS…GVSS). Positions 1062–1071 (ENGTANSQKN) are enriched in polar residues. Polar residues predominate over residues 1213–1274 (KDQPIQASRS…NANRTASRKV (62 aa)). The segment covering 1355–1365 (REIEIDLESKN) has biased composition (basic and acidic residues).

Belongs to the DNA polymerase type-A family. Mg(2+) serves as cofactor. Post-translationally, in adult males, cleaved to produce a 100 kDa form. Expressed in ovaries (at protein level).

Its subcellular location is the nucleus. It carries out the reaction DNA(n) + a 2'-deoxyribonucleoside 5'-triphosphate = DNA(n+1) + diphosphate. Resistant to aphidicolin, but sensitive to dideoxythymindine triphosphate (ddTTP) and N-ethyl malemide (NEM). Its function is as follows. Multifunctional protein with both DNA polymerase and ATPase activities. Might have 3' to 5' exonuclease activity. Plays a role in different DNA repair pathways such as DNA strand cross-link repair and microhomology-mediated end-joining (MMEJ), an alternative non-homologous end-joining (NHEJ) machinery triggered in response to double-strand breaks. MMEJ is an error-prone repair pathway that produces deletions of sequences from the strand being repaired and promotes genomic rearrangements, such as telomere fusions. Utilizes short microhomologies present in partially and fully single-stranded DNA (ssDNA) as primers for DNA synthesis. Prefers poly(dA)/oligo(dT) as a template-primer. The ATPase activity is necessary during interstrand cross-link (ICL) repair and has a critical role in generating templated insertions during MMEJ. Necessary for processing DNA damage induced by oxygen and N-ethylation. In follicle cells, contributes to double-strand break repair at physiological rereplication forks necessary for survival of fertilized eggs. The chain is DNA polymerase theta from Drosophila melanogaster (Fruit fly).